Reading from the N-terminus, the 286-residue chain is Transcription factor MYB62 (286 aa).

2 consecutive HTH myb-type domains span residues 16–68 (DEEL…LNYL) and 69–123 (KPDI…QKQA). 2 consecutive DNA-binding regions (H-T-H motif) follow at residues 44–68 (WNHV…LNYL) and 96–119 (WSKI…RTRV).

As to expression, expressed in leaves and flowers.

The protein localises to the nucleus. In terms of biological role, transcription repressor of phosphate (Pi) starvation-induced genes. Negatively regulates Pi starvation responses via the repression of gibberellic acid (GA) biosynthesis and signaling. Modulates root architecture, phosphatase activity, and Pi uptake and accumulation. The protein is Transcription factor MYB62 of Arabidopsis thaliana (Mouse-ear cress).